The sequence spans 170 residues: Endoribonuclease YbeY (170 aa).

Zn(2+) is bound by residues H118, H122, and H128.

This sequence belongs to the endoribonuclease YbeY family. Requires Zn(2+) as cofactor.

Its subcellular location is the cytoplasm. Functionally, single strand-specific metallo-endoribonuclease involved in late-stage 70S ribosome quality control and in maturation of the 3' terminus of the 16S rRNA. This is Endoribonuclease YbeY from Mycobacteroides abscessus (strain ATCC 19977 / DSM 44196 / CCUG 20993 / CIP 104536 / JCM 13569 / NCTC 13031 / TMC 1543 / L948) (Mycobacterium abscessus).